The primary structure comprises 317 residues: MASLKVPSNVPLPEDDAEQLHKAFSGWGTNEKLIISILAHRNAAQRSLIRSVYAATYNEDLLKALDKELSSDFERAVMLWTLDPPERDAYLAKESTKMFTKNNWVLVEIACTRPALELIKVKQAYQARYKKSIEEDVAQHTSGDLRKLLLPLVSTFRYEGDDVNMMLARSEAKILHEKVSEKSYSDDDFIRILTTRSKAQLGATLNHYNNEYGNAINKNLKEESDDNDYMKLLRAVITCLTYPEKHFEKVLRLSINKMGTDEWGLTRVVTTRTEVDMERIKEEYQRRNSIPLDRAIAKDTSGDYEDMLVALLGHGDA.

At A2 the chain carries N-acetylalanine. Annexin repeat units lie at residues 11 to 82, 83 to 154, 166 to 238, and 242 to 313; these read PLPE…LWTL, DPPE…PLVS, MLAR…AVIT, and YPEK…ALLG. Residues F24, G26, G28, and E68 each contribute to the Ca(2+) site. Phosphoserine is present on S95. T100 and T112 each carry phosphothreonine. The residue at position 129 (Y129) is a Phosphotyrosine. Residues I255 and G259 each coordinate Ca(2+). Y284 carries the phosphotyrosine modification. S289 bears the Phosphoserine mark. The Ca(2+) site is built by D299, T300, and E305.

This sequence belongs to the annexin (TC 1.A.31.1) family. In terms of tissue distribution, expressed mainly in roots and flowers. Low in stems and bearly detectable in leaves.

The protein resides in the cytoplasm. Its subcellular location is the cytosol. It localises to the membrane. Its function is as follows. May mediate regulated, targeted secretion of Golgi-derived vesicles during seedling development. The chain is Annexin D2 (ANN2) from Arabidopsis thaliana (Mouse-ear cress).